An 88-amino-acid polypeptide reads, in one-letter code: Small ribosomal subunit protein uS17 (88 aa).

The protein belongs to the universal ribosomal protein uS17 family. As to quaternary structure, part of the 30S ribosomal subunit.

One of the primary rRNA binding proteins, it binds specifically to the 5'-end of 16S ribosomal RNA. The protein is Small ribosomal subunit protein uS17 of Lactobacillus acidophilus (strain ATCC 700396 / NCK56 / N2 / NCFM).